Here is a 345-residue protein sequence, read N- to C-terminus: METFVRLFKDSPQQRSNAWHATRRTQVGGSDLASILGLNPYKSYYITLAEKANLFKKNLNHAACSWGTLFERVSKDLLELFCQTTVIGDNIHIDGTYLGYPGHSNSPDGFCHLTLGYTQQSWEIKTIFNDVCYETTKRIPVLVEIKSPFNRKIKNSVPSYYMPQIQSGLALSPPISMGIYVEAMFRVCSIHQLGWNHETNTDIHPPESMLPLAWGIITICSTQEHTEAPQDFGTLNAEAFHQLLETLYQKNQYTIHYSMPYETACPEMSNVVGYFGWKVFIFQIIPVMKHPQFLKDKYPIIQQFLHDLHTLKTSPSPMEAYEKICCSKESLLSTEDIDDFTNMLT.

It belongs to the asfivirus D345L family. Interacts with IKKA/CHUK and IKBKB.

Its subcellular location is the host cytoplasm. Plays a role in the negative regulation of host NF-kappa-B signaling pathway. Mechanistically, recruits IKKA/CHUK and IKBKB to suppress their kinase activity towards NFKBIA. The polypeptide is Protein D345L (Ornithodoros (relapsing fever ticks)).